Consider the following 545-residue polypeptide: MTTNYIFVTGGVVSSLGKGIAAASLAAILEARGLNVTIMKLDPYINVDPGTMSPIQHGEVFVTEDGAETDLDLGHYERFIRTKMSRRNNFTTGRIYSDVLRKERRGDYLGATVQVIPHITNAIKERIIEGGEGHDVVLVEIGGTVGDIESLPFLEAIRQLAVDIGREHALFMHLTLVPYMAAAGEVKTKPTQHSVKELLSIGIQPDILICRSDRAVPANERAKIALFCNVAEKAVISLKDVDSIYKIPGMLKSQGLDDYICKRFSLDCPEANLAEWEQVIYEEANPAGEVTIGMVGKYIELPDAYKSVIEALKHGGLKNRVTVNIKLIDSQDVETRGVEILKDLDAILIPGGFGYRGVEGKVATARYARENNIPYLGICLGMQVALIEFARNVAGMENANSTEFVPDCKYPVVALITEWRDENGNVEVRTEKSDLGGTMRLGAQMCQLSDESLVRQMYGTPTITERHRHRYEVNNMLLNQIEAAGLRIAGRSGDDQLVEIIEVPNHPWFVACQFHPEFTSTPRDGHPLFAGFVKAASEYQKRQAK.

Positions 1 to 266 (MTTNYIFVTG…DDYICKRFSL (266 aa)) are amidoligase domain. Ser-14 is a CTP binding site. Ser-14 contacts UTP. ATP contacts are provided by residues 15–20 (SLGKGI) and Asp-72. Residues Asp-72 and Glu-140 each contribute to the Mg(2+) site. CTP contacts are provided by residues 147–149 (DIE), 187–192 (KTKPTQ), and Lys-223. UTP contacts are provided by residues 187-192 (KTKPTQ) and Lys-223. 239–241 (KDV) contributes to the ATP binding site. The Glutamine amidotransferase type-1 domain occupies 291-542 (TIGMVGKYIE…VKAASEYQKR (252 aa)). Residue Gly-352 coordinates L-glutamine. Cys-379 serves as the catalytic Nucleophile; for glutamine hydrolysis. Residues 380-383 (LGMQ), Glu-403, and Arg-470 contribute to the L-glutamine site. Catalysis depends on residues His-515 and Glu-517.

It belongs to the CTP synthase family. In terms of assembly, homotetramer.

It catalyses the reaction UTP + L-glutamine + ATP + H2O = CTP + L-glutamate + ADP + phosphate + 2 H(+). The catalysed reaction is L-glutamine + H2O = L-glutamate + NH4(+). The enzyme catalyses UTP + NH4(+) + ATP = CTP + ADP + phosphate + 2 H(+). It participates in pyrimidine metabolism; CTP biosynthesis via de novo pathway; CTP from UDP: step 2/2. Allosterically activated by GTP, when glutamine is the substrate; GTP has no effect on the reaction when ammonia is the substrate. The allosteric effector GTP functions by stabilizing the protein conformation that binds the tetrahedral intermediate(s) formed during glutamine hydrolysis. Inhibited by the product CTP, via allosteric rather than competitive inhibition. Catalyzes the ATP-dependent amination of UTP to CTP with either L-glutamine or ammonia as the source of nitrogen. Regulates intracellular CTP levels through interactions with the four ribonucleotide triphosphates. This chain is CTP synthase, found in Citrobacter koseri (strain ATCC BAA-895 / CDC 4225-83 / SGSC4696).